The sequence spans 129 residues: MELKGRSISKGIIEGIAIVSKKPFSFLGGVDEEGNIIDKDSDLYGQSLKGKIFVFPYGRGSTVGSYVIYGLAKRGILKGIVNKECEPIVATGAILGGIPLVDKIDIEEIKTGDRIVVDGNTGVVKILNK.

The active-site Proton acceptor is Ser61.

It belongs to the AcnX type II small subunit family. In terms of assembly, heterodimer composed of a large subunit (PMDh-L) and a small subunit (PMDh-S).

The enzyme catalyses (R)-5-phosphomevalonate = (2E)-3-methyl-5-phosphooxypent-2-enoate + H2O. Its pathway is isoprenoid biosynthesis; isopentenyl diphosphate biosynthesis via mevalonate pathway. Component of a hydro-lyase that catalyzes the dehydration of mevalonate 5-phosphate (MVA5P) to form trans-anhydromevalonate 5-phosphate (tAHMP). Involved in the archaeal mevalonate (MVA) pathway, which provides fundamental precursors for isoprenoid biosynthesis, such as isopentenyl diphosphate (IPP) and dimethylallyl diphosphate (DMAPP). The chain is Phosphomevalonate dehydratase small subunit from Methanocaldococcus jannaschii (strain ATCC 43067 / DSM 2661 / JAL-1 / JCM 10045 / NBRC 100440) (Methanococcus jannaschii).